We begin with the raw amino-acid sequence, 96 residues long: Protein FPV129 (96 aa).

The next 2 membrane-spanning stretches (helical) occupy residues 36-56 and 71-91; these read IILDLVLNLIFDSLITSFVII and LFLLMSYAIFRFIVMYLLYIV.

Belongs to the chordopoxvirinae L2 family.

The protein resides in the virion membrane. Its subcellular location is the host cytoplasm. In terms of biological role, early protein involved in early virion morphogenesis. Participates in the formation and elongation of crescent-shaped membrane precursors of immature virions in cytoplasmic factories. The protein is Protein FPV129 of Vertebrata (FPV).